Consider the following 318-residue polypeptide: Acetaldehyde dehydrogenase 1 (318 aa).

NAD(+) is bound at residue 15–18 (SGNI). Residue Cys133 is the Acyl-thioester intermediate of the active site. Residues 164–172 (SAGPGTRAN) and Asn289 each bind NAD(+).

The protein belongs to the acetaldehyde dehydrogenase family.

It carries out the reaction acetaldehyde + NAD(+) + CoA = acetyl-CoA + NADH + H(+). This Azotobacter vinelandii (strain DJ / ATCC BAA-1303) protein is Acetaldehyde dehydrogenase 1 (xylQ).